The sequence spans 210 residues: Somatotropin-1 (210 aa).

Residues 1–22 (MARALVLLSVVLVSLLVNQGRA) form the signal peptide. A Zn(2+)-binding site is contributed by histidine 38. Cysteines 71 and 183 form a disulfide. Residue glutamate 192 participates in Zn(2+) binding. Cysteine 200 and cysteine 208 are disulfide-bonded.

Belongs to the somatotropin/prolactin family.

The protein resides in the secreted. Functionally, growth hormone plays an important role in growth control and is involved in the regulation of several anabolic processes. Implicated as an osmoregulatory substance important for seawater adaptation. The sequence is that of Somatotropin-1 (gh1) from Carassius auratus (Goldfish).